The primary structure comprises 593 residues: Numb-related protein 1 (593 aa).

Disordered stretches follow at residues 1–97, 235–278, 331–375, and 493–581; these read MSAS…WQPD, TAQV…NSRS, LRQG…FGTQ, and MSMS…DPFD. Position 17 is a phosphoserine; by PKC (serine 17). The span at 27–37 shows a compositional bias: polar residues; the sequence is QNSLVSEQQPS. Residues 64–74 are compositionally biased toward basic residues; the sequence is RSLRLPKKRRD. Position 65 is a phosphoserine; by PKC (serine 65). Positions 102–255 constitute a PID domain; the sequence is RTGTCCFNVK…STSSTPPKDI (154 aa). 3 stretches are compositionally biased toward polar residues: residues 236–251, 261–278, and 354–364; these read AQVNVQSAQESTSSTP, EDNTSEGTSTQNPSNSRS, and SLRTVSNNPTE. The span at 493 to 511 shows a compositional bias: low complexity; that stretch reads MSMSPTSPSSDPPSTSSYS. A compositionally biased stretch (pro residues) spans 516-528; that stretch reads SGPPPAHAPPPLP. Over residues 532–565 the composition is skewed to polar residues; it reads AVSNGSPSIYQQQLQQANSTRNSPAGINWNSSPN.

Interacts with pkc-3. Expressed in cells comprising the intestine, pharyngeal cells, the anal sphincter and depressor muscles.

It localises to the cytoplasm. Its subcellular location is the cell cortex. The protein resides in the cytoskeleton. It is found in the membrane. In terms of biological role, involved in the tethering and targeting of pkc-3 to modulate the intracellular distribution of the kinase. The complex formed with pkc-3 complexes are likely to be involved in assembly, maintenance, and/or regulation of protein complexes that execute asymmetric and/or polarized cell functions. This is Numb-related protein 1 from Caenorhabditis elegans.